Here is a 247-residue protein sequence, read N- to C-terminus: Carboxy-S-adenosyl-L-methionine synthase (247 aa).

S-adenosyl-L-methionine is bound by residues Tyr-39, 64–66, 89–90, 117–118, Asn-132, and Arg-199; these read GCS, DN, and DI.

This sequence belongs to the class I-like SAM-binding methyltransferase superfamily. Cx-SAM synthase family. As to quaternary structure, homodimer.

It carries out the reaction prephenate + S-adenosyl-L-methionine = carboxy-S-adenosyl-L-methionine + 3-phenylpyruvate + H2O. Its function is as follows. Catalyzes the conversion of S-adenosyl-L-methionine (SAM) to carboxy-S-adenosyl-L-methionine (Cx-SAM). This chain is Carboxy-S-adenosyl-L-methionine synthase, found in Escherichia coli O7:K1 (strain IAI39 / ExPEC).